A 315-amino-acid chain; its full sequence is 1,2-dihydroxy-3,5-cyclohexadiene-1,4-dicarboxylate dehydrogenase (315 aa).

Residues His159, His203, and His255 each coordinate a divalent metal cation.

This sequence belongs to the PdxA family.

It carries out the reaction (3S,4R)-3,4-dihydroxycyclohexa-1,5-diene-1,4-dicarboxylate + NAD(+) = 3,4-dihydroxybenzoate + CO2 + NADH. Involved in the degradation of terephthalate (TPA) via the protocatechuate (PCA) 4,5-cleavage pathway. Catalyzes the dehydrogenation of 1,2-dihydroxy-3,5-cyclohexadiene-1,4-dicarboxylate (DCD) to yield protocatechuate (PCA). This Comamonas sp protein is 1,2-dihydroxy-3,5-cyclohexadiene-1,4-dicarboxylate dehydrogenase (tphBI).